The sequence spans 1630 residues: Merozoite surface protein 1 (1630 aa).

An N-terminal signal peptide occupies residues 1 to 19 (MKIIFFLCSFLFFIINTQC). Residues 60 to 113 (TKGASAQSGTSGTSGTSGPSGPSGTSPSSRSNTLPRSNTSSGASPPADASDSDA) are disordered. The tripeptide SG(TP) repeat stretch occupies residues 67–84 (SGTSGTSGTSGPSGPSGT). Over residues 67–88 (SGTSGTSGTSGPSGPSGTSPSS) the composition is skewed to low complexity. Residues 89-98 (RSNTLPRSNT) are compositionally biased toward polar residues. Residue Asn-97 is glycosylated (N-linked (GlcNAc...) asparagine). Over residues 99-108 (SSGASPPADA) the composition is skewed to low complexity. A glycan (N-linked (GlcNAc...) asparagine) is linked at Asn-259. The interval 680–755 (KKNIKTEGQS…VPTPPAPVNN (76 aa)) is disordered. Polar residues-rich tracts occupy residues 685-695 (TEGQSDNSEPS) and 702-713 (GQATTKPGQQAG). Positions 721-732 (VQAQAQEQKQAQ) are enriched in low complexity. Residues Asn-755, Asn-759, Asn-774, and Asn-835 are each glycosylated (N-linked (GlcNAc...) asparagine). The interval 884–906 (SMQPLSLTPQDKPEVSANDDTSH) is disordered. Residues Asn-911, Asn-955, Asn-1049, Asn-1156, and Asn-1165 are each glycosylated (N-linked (GlcNAc...) asparagine). The required for binding to host erythrocyte cell membrane stretch occupies residues 993–1107 (QLSFDLYNKY…EESIQTEDNY (115 aa)). The segment covering 1190–1203 (VSESGSDTLEQSQP) has biased composition (polar residues). A disordered region spans residues 1190–1220 (VSESGSDTLEQSQPKKPASTHVGAESNTITT). N-linked (GlcNAc...) asparagine glycans are attached at residues Asn-1436 and Asn-1517. 2 consecutive EGF-like domains span residues 1521-1561 (HQCV…VENP) and 1562-1610 (NPTC…FCSS). Intrachain disulfides connect Cys-1523-Cys-1534, Cys-1528-Cys-1544, Cys-1546-Cys-1557, Cys-1565-Cys-1578, Cys-1572-Cys-1592, and Cys-1594-Cys-1608. Ser-1609 is lipidated: GPI-anchor amidated serine. The propeptide at 1610–1630 (SSNFLGISFLLILMLILYSFI) is removed in mature form.

As to quaternary structure, forms a complex composed of subunits p83, p30, p38, and p42 which remain non-covalently associated; the complex is formed at the merozoite surface prior to egress from host erythrocytes. Forms a complex composed of processed MSP1 subunits, MSP6 subunit p36 and MSP7; the complex is formed at the merozoite surface prior to egress from host erythrocytes. Within the complex, interacts (via subunit p38) with MSP6 subunit p36 and (via subunits p83, p30 and p38) with MSP7 (via subunit p22). Forms a complex composed of MSP1, MSP6, DBLMSP1 and DBLMSP2. Within the complex, interacts (via subunit p38) with DBLMSP1 and DBLMSP2. Forms a complex composed of MSP1, and rhoptry proteins RhopH3, RAP1 and CLAG9/RhopH3. Within the complex, interacts (via subunits p42 and p19) with RhopH3 (via C-terminus). Forms a complex composed of MSP1, MSP6, MSP7, MSP9 and MSP3; within the complex, MSP6 and MSP9 mediate the binding to the host erythrocyte. Interacts (via subunits p19 and p42) with MSP9; the interaction is direct; MSP1 subunits p19 or p42, and MSP9 form a co-ligand complex that interacts with host SLC4A1/Band 3 protein. May interact with PFD6. Interacts with host spectrin. Interacts with host glycophorin GYPA in a sialic acid-independent manner. In terms of assembly, interacts with host proinflammatory cytokine S100P; the interaction blocks S100P inflammatory and chemotactic activities. As to quaternary structure, interacts with host SLC4A1/Band 3 (via 5ABC region) on the host erythrocyte surface in a sialic acid-independent manner. Post-translationally, the p190 precursor is cleaved by SUB1 prior to merozoite egress into 4 subunits p83, p30, p38, and p42 which remain non-covalently associated. SUB1-mediated proteolytic cleavage occurs in an orderly manner; the first cleavage occurs at the p83/p30 site, followed by cleavage at the p30/p38 site, the last cleavage occurs at the p38/p42 site. The order of cleavage is essential for parasite viability. SUB1-mediated processing is essential for merozoite egress. In a second processing step during erythrocyte invasion, p42 is cleaved by SUB2 into p33 and p19; the latter remains attached to the merozoite surface via its GPI-anchor and stays on the surface during the subsequent ring stage.

It is found in the cell membrane. The protein localises to the secreted. Its subcellular location is the vacuole membrane. During the asexual blood stage, involved in merozoite egress from host erythrocytes possibly via its interaction with the host cytoskeleton protein spectrin resulting in the destabilization of the host cytoskeleton and thus leading to erythrocyte cell membrane rupture. Involved in the binding to host erythrocytes and is required for host erythrocyte invasion. In terms of biological role, by binding to host proinflammatory cytokine S100P may interfere with host immune responses. Its function is as follows. Involved in merozoite invasion of host erythrocytes. May play a role in the biogenesis and/or function of the food vacuole during the intraerythrocytic development. The sequence is that of Merozoite surface protein 1 from Plasmodium falciparum (isolate K1 / Thailand).